Consider the following 433-residue polypeptide: Histidine--tRNA ligase (433 aa).

This sequence belongs to the class-II aminoacyl-tRNA synthetase family. Homodimer.

The protein localises to the cytoplasm. It carries out the reaction tRNA(His) + L-histidine + ATP = L-histidyl-tRNA(His) + AMP + diphosphate + H(+). This is Histidine--tRNA ligase from Blochmanniella floridana.